The following is a 404-amino-acid chain: Floricaula/leafy-like protein FL1 (404 aa).

The disordered stretch occupies residues 210–251 (IGVPEHSSESDERKADTNKQKRRRSKEPGEDGEDRPREHPFI). Composition is skewed to basic and acidic residues over residues 215-228 (HSSE…DTNK) and 235-249 (KEPG…REHP). 3 DNA-binding regions span residues 246-250 (REHPF), 315-322 (NKPKMRHY), and 386-389 (YVPT).

The protein belongs to the FLO/LFY family. In terms of tissue distribution, expressed in both male and female cones, vegetative buds and needles, but not in the roots.

The protein resides in the nucleus. Functionally, probable transcription factor. The sequence is that of Floricaula/leafy-like protein FL1 from Pinus radiata (Monterey pine).